We begin with the raw amino-acid sequence, 393 residues long: Anhydro-N-acetylmuramic acid kinase (393 aa).

9-16 contributes to the ATP binding site; sequence GTSADGVD.

Belongs to the anhydro-N-acetylmuramic acid kinase family.

It catalyses the reaction 1,6-anhydro-N-acetyl-beta-muramate + ATP + H2O = N-acetyl-D-muramate 6-phosphate + ADP + H(+). Its pathway is amino-sugar metabolism; 1,6-anhydro-N-acetylmuramate degradation. It participates in cell wall biogenesis; peptidoglycan recycling. In terms of biological role, catalyzes the specific phosphorylation of 1,6-anhydro-N-acetylmuramic acid (anhMurNAc) with the simultaneous cleavage of the 1,6-anhydro ring, generating MurNAc-6-P. Is required for the utilization of anhMurNAc either imported from the medium or derived from its own cell wall murein, and thus plays a role in cell wall recycling. The sequence is that of Anhydro-N-acetylmuramic acid kinase from Acidithiobacillus ferrooxidans (strain ATCC 23270 / DSM 14882 / CIP 104768 / NCIMB 8455) (Ferrobacillus ferrooxidans (strain ATCC 23270)).